The following is a 417-amino-acid chain: Prostaglandin E2 receptor EP3 subtype (417 aa).

The Extracellular segment spans residues Met1–Ala52. Asn17 and Asn35 each carry an N-linked (GlcNAc...) asparagine glycan. Residues Phe53–Arg77 traverse the membrane as a helical segment. At Arg78 to Cys90 the chain is on the cytoplasmic side. A helical membrane pass occupies residues Ile91–Val111. The Extracellular segment spans residues Leu112 to Thr130. A helical membrane pass occupies residues Phe131–Val152. Over Glu153–Arg174 the chain is Cytoplasmic. Residues Ala175–Gly196 form a helical membrane-spanning segment. At Gln197–Asn226 the chain is on the extracellular side. Asn216 carries an N-linked (GlcNAc...) asparagine glycan. Residues Val227–Ile252 form a helical membrane-spanning segment. Residues Lys253 to Gln282 lie on the Cytoplasmic side of the membrane. The chain crosses the membrane as a helical span at residues Leu283–Phe306. The N-linked (GlcNAc...) asparagine glycan is linked to Asn307. Residues Asn307–Phe326 lie on the Extracellular side of the membrane. The helical transmembrane segment at Phe327–Leu348 threads the bilayer. Topologically, residues Arg349–Gln417 are cytoplasmic.

The protein belongs to the G-protein coupled receptor 1 family. In terms of assembly, interacts (via C-terminus) with MKLN1.

Its subcellular location is the cell membrane. In terms of biological role, receptor for prostaglandin E2 (PGE2). The various isoforms have identical ligand binding properties but interact with different second messenger systems: isoform EP3A couples to G(i)/G(o) proteins; isoform EP3B and isoform EP3C couple to G(s), and isoform EP3D couples to G(i), G(s) and G(p). Required for normal development of fever in response to pyrinogens, including IL1B, prostaglandin E2 and bacterial lipopolysaccharide (LPS). Required for normal potentiation of platelet aggregation by prostaglandin E2, and thus plays a role in the regulation of blood coagulation. Required for increased HCO3(-) secretion in the duodenum in response to mucosal acidification, and thereby contributes to the protection of the mucosa against acid-induced ulceration. Not required for normal kidney function, normal urine volume and osmolality. The sequence is that of Prostaglandin E2 receptor EP3 subtype (PTGER3) from Bos taurus (Bovine).